The sequence spans 145 residues: MSVAEFDADVIVDARDCIMGRVASQVAEQALDGETVAVVNAERAVITGREEQIVEKYEKRVDIGNDNGYFYPKRPDGIFKRTIRGMLPHKKQRGREAFESVRVYLGNPYDEDGEVLDGTSLDRLSNIKFVTLGEISETLGANKTW.

It belongs to the universal ribosomal protein uL13 family. Part of the 50S ribosomal subunit. Interacts weakly with proteins L3 and L6.

This protein is one of the early assembly proteins of the 50S ribosomal subunit. Binds to 23S rRNA. The chain is Large ribosomal subunit protein uL13 from Haloarcula marismortui (strain ATCC 43049 / DSM 3752 / JCM 8966 / VKM B-1809) (Halobacterium marismortui).